We begin with the raw amino-acid sequence, 234 residues long: Large ribosomal subunit protein uL1 (234 aa).

It belongs to the universal ribosomal protein uL1 family. As to quaternary structure, part of the 50S ribosomal subunit.

Its function is as follows. Binds directly to 23S rRNA. The L1 stalk is quite mobile in the ribosome, and is involved in E site tRNA release. In terms of biological role, protein L1 is also a translational repressor protein, it controls the translation of the L11 operon by binding to its mRNA. The polypeptide is Large ribosomal subunit protein uL1 (Anaeromyxobacter dehalogenans (strain 2CP-C)).